Consider the following 450-residue polypeptide: Deoxyguanosinetriphosphate triphosphohydrolase-like protein (450 aa).

The HD domain occupies 61-274; that stretch reads RLTHSLEVAQ…MELADDIAYA (214 aa).

This sequence belongs to the dGTPase family. Type 2 subfamily.

This Histophilus somni (strain 2336) (Haemophilus somnus) protein is Deoxyguanosinetriphosphate triphosphohydrolase-like protein.